We begin with the raw amino-acid sequence, 323 residues long: tRNA U34 carboxymethyltransferase (323 aa).

Residues Lys91, Trp105, Lys110, Gly130, 180-181 (IE), Met196, Tyr200, and Arg315 each bind carboxy-S-adenosyl-L-methionine.

Belongs to the class I-like SAM-binding methyltransferase superfamily. CmoB family. In terms of assembly, homotetramer.

The catalysed reaction is carboxy-S-adenosyl-L-methionine + 5-hydroxyuridine(34) in tRNA = 5-carboxymethoxyuridine(34) in tRNA + S-adenosyl-L-homocysteine + H(+). Functionally, catalyzes carboxymethyl transfer from carboxy-S-adenosyl-L-methionine (Cx-SAM) to 5-hydroxyuridine (ho5U) to form 5-carboxymethoxyuridine (cmo5U) at position 34 in tRNAs. In Geobacter sp. (strain M21), this protein is tRNA U34 carboxymethyltransferase.